We begin with the raw amino-acid sequence, 227 residues long: Cytochrome c oxidase subunit 2 (227 aa).

At 1–14 (MAHRAQVGLQDATS) the chain is on the mitochondrial intermembrane side. Residues 15–45 (PIMEELVIFHDHALMIIFLICFLVLYALFLT) form a helical membrane-spanning segment. Residues 46 to 59 (LTTKLTNTNISDAQ) are Mitochondrial matrix-facing. Residues 60–87 (EMETIWTTLPAIILILIALPSLRILYLT) traverse the membrane as a helical segment. Residues 88–227 (DEINDPSFTI…IFEMGPVFAL (140 aa)) are Mitochondrial intermembrane-facing. Residues H161, C196, E198, C200, H204, and M207 each contribute to the Cu cation site. E198 is a binding site for Mg(2+).

This sequence belongs to the cytochrome c oxidase subunit 2 family. As to quaternary structure, component of the cytochrome c oxidase (complex IV, CIV), a multisubunit enzyme composed of 14 subunits. The complex is composed of a catalytic core of 3 subunits MT-CO1, MT-CO2 and MT-CO3, encoded in the mitochondrial DNA, and 11 supernumerary subunits COX4I, COX5A, COX5B, COX6A, COX6B, COX6C, COX7A, COX7B, COX7C, COX8 and NDUFA4, which are encoded in the nuclear genome. The complex exists as a monomer or a dimer and forms supercomplexes (SCs) in the inner mitochondrial membrane with NADH-ubiquinone oxidoreductase (complex I, CI) and ubiquinol-cytochrome c oxidoreductase (cytochrome b-c1 complex, complex III, CIII), resulting in different assemblies (supercomplex SCI(1)III(2)IV(1) and megacomplex MCI(2)III(2)IV(2)). Found in a complex with TMEM177, COA6, COX18, COX20, SCO1 and SCO2. Interacts with TMEM177 in a COX20-dependent manner. Interacts with COX20. Interacts with COX16. The cofactor is Cu cation.

The protein resides in the mitochondrion inner membrane. It catalyses the reaction 4 Fe(II)-[cytochrome c] + O2 + 8 H(+)(in) = 4 Fe(III)-[cytochrome c] + 2 H2O + 4 H(+)(out). In terms of biological role, component of the cytochrome c oxidase, the last enzyme in the mitochondrial electron transport chain which drives oxidative phosphorylation. The respiratory chain contains 3 multisubunit complexes succinate dehydrogenase (complex II, CII), ubiquinol-cytochrome c oxidoreductase (cytochrome b-c1 complex, complex III, CIII) and cytochrome c oxidase (complex IV, CIV), that cooperate to transfer electrons derived from NADH and succinate to molecular oxygen, creating an electrochemical gradient over the inner membrane that drives transmembrane transport and the ATP synthase. Cytochrome c oxidase is the component of the respiratory chain that catalyzes the reduction of oxygen to water. Electrons originating from reduced cytochrome c in the intermembrane space (IMS) are transferred via the dinuclear copper A center (CU(A)) of subunit 2 and heme A of subunit 1 to the active site in subunit 1, a binuclear center (BNC) formed by heme A3 and copper B (CU(B)). The BNC reduces molecular oxygen to 2 water molecules using 4 electrons from cytochrome c in the IMS and 4 protons from the mitochondrial matrix. The protein is Cytochrome c oxidase subunit 2 (MT-CO2) of Pongo pygmaeus (Bornean orangutan).